A 198-amino-acid chain; its full sequence is Ribonuclease HII (198 aa).

An RNase H type-2 domain is found at 11–198 (TCIAGVDEVG…APVKRALGLA (188 aa)). Positions 17, 18, and 109 each coordinate a divalent metal cation.

It belongs to the RNase HII family. Mn(2+) is required as a cofactor. It depends on Mg(2+) as a cofactor.

The protein localises to the cytoplasm. It carries out the reaction Endonucleolytic cleavage to 5'-phosphomonoester.. Endonuclease that specifically degrades the RNA of RNA-DNA hybrids. The sequence is that of Ribonuclease HII from Pectobacterium carotovorum subsp. carotovorum (strain PC1).